We begin with the raw amino-acid sequence, 111 residues long: Large ribosomal subunit protein uL22 (111 aa).

The protein belongs to the universal ribosomal protein uL22 family. In terms of assembly, part of the 50S ribosomal subunit.

Its function is as follows. This protein binds specifically to 23S rRNA; its binding is stimulated by other ribosomal proteins, e.g. L4, L17, and L20. It is important during the early stages of 50S assembly. It makes multiple contacts with different domains of the 23S rRNA in the assembled 50S subunit and ribosome. The globular domain of the protein is located near the polypeptide exit tunnel on the outside of the subunit, while an extended beta-hairpin is found that lines the wall of the exit tunnel in the center of the 70S ribosome. The polypeptide is Large ribosomal subunit protein uL22 (Clostridium novyi (strain NT)).